The primary structure comprises 329 residues: Delta-aminolevulinic acid dehydratase (329 aa).

The Zn(2+) site is built by Cys122, Cys124, and Cys132. The active-site Schiff-base intermediate with substrate is Lys199. 5-aminolevulinate contacts are provided by Arg209 and Arg221. Catalysis depends on Lys252, which acts as the Schiff-base intermediate with substrate. 2 residues coordinate 5-aminolevulinate: Ser279 and Tyr318.

This sequence belongs to the ALAD family. As to quaternary structure, homooctamer. Requires Zn(2+) as cofactor.

It catalyses the reaction 2 5-aminolevulinate = porphobilinogen + 2 H2O + H(+). It participates in porphyrin-containing compound metabolism; protoporphyrin-IX biosynthesis; coproporphyrinogen-III from 5-aminolevulinate: step 1/4. In terms of biological role, catalyzes an early step in the biosynthesis of tetrapyrroles. Binds two molecules of 5-aminolevulinate per subunit, each at a distinct site, and catalyzes their condensation to form porphobilinogen. The polypeptide is Delta-aminolevulinic acid dehydratase (hem2) (Schizosaccharomyces pombe (strain 972 / ATCC 24843) (Fission yeast)).